Reading from the N-terminus, the 448-residue chain is MKILLLCVALLLIWDNGMVLGEQEVSDNELQELSTQGSRYINKEIQNAVQGVKHIKTLIEKTNAERKSLLNSLEEAKKKKEDALEDTRDSEMKLKAFPEVCNETMMALWEECKPCLKHTCMKFYARVCRSGSGLVGQQLEEFLNQSSPFYFWMNGDRIDSLLESDRQQSQVLDAMQDSFARASGIIDTLFQDRFFARELHDPHYFSPIGFPHKRPHFLYPKSRLVRSLMSPSHYGPPSFHNMFQPFFEMIHQAQQAMDVQLHSPAFQFPDVDFLREGEDDRTVCKEIRRNSTGCLKMKGQCEKCQEILSVDCSTNNPAQANLRQELNDSLQVAERLTEQYKELLQSFQSKMLNTSSLLEQLNDQFNWVSQLANLTQGEDKYYLRVSTVTTHSSDSEVPSRVTEVVVKLFDSDPITVVLPEEVSKDNPKFMDTVAEKALQEYRRKSRAE.

Positions 1–21 (MKILLLCVALLLIWDNGMVLG) are cleaved as a signal peptide. Residues 77-80 (KKKK) carry the Nuclear localization signal motif. 5 disulfides stabilise this stretch: cysteine 101–cysteine 312, cysteine 112–cysteine 304, cysteine 115–cysteine 301, cysteine 120–cysteine 294, and cysteine 128–cysteine 284. Asparagine 102 is a glycosylation site (N-linked (GlcNAc...) asparagine). Serine 132 carries the post-translational modification Phosphoserine. N-linked (GlcNAc...) asparagine glycans are attached at residues asparagine 144, asparagine 290, asparagine 327, asparagine 353, and asparagine 373. Position 395 is a phosphoserine (serine 395). The Nuclear localization signal motif lies at 442–446 (RRKSR).

This sequence belongs to the clusterin family. In terms of assembly, antiparallel disulfide-linked heterodimer of an alpha chain and a beta chain. Self-associates and forms higher oligomers. Interacts with a broad range of misfolded proteins, including APP, APOC2 and LYZ. Slightly acidic pH promotes interaction with misfolded proteins. Forms high-molecular weight oligomers upon interaction with misfolded proteins. Interacts with APOA1, LRP2, CLUAP1 and PON1. Interacts with the complement membrane attack complex. Interacts (via alpha chain) with XRCC6. Interacts with SYVN1, COMMD1, BTRC, CUL1 and with ubiquitin and SCF (SKP1-CUL1-F-box protein) E3 ubiquitin-protein ligase complexes. Interacts (via alpha chain) with BAX in stressed cells, where BAX undergoes a conformation change leading to association with the mitochondrial membrane. Does not interact with BAX in unstressed cells. Found in a complex with LTF, CLU, EPPIN and SEMG1. Interacts (immaturely glycosylated pre-secreted form) with HSPA5; this interaction promotes CLU stability and facilitates stress-induced CLU retrotranslocation from the secretory pathway to the mitochondria, thereby reducing stress-induced apoptosis by stabilizing mitochondrial membrane integrity. Interacts with BCL2L1; this interaction releases and activates BAX and promotes cell death. Interacts with TGFBR2 and ACVR1. Interacts (secreted form) with STMN3; this interaction may act as an important modulator during neuronal differentiation. Interacts with VLDLR and LRP8. In terms of processing, proteolytically cleaved on its way through the secretory system, probably within the Golgi lumen. Proteolytic cleavage is not necessary for its chaperone activity. All non-secreted forms are not proteolytically cleaved. Chaperone activity of uncleaved forms is dependent on a non-reducing environment. Polyubiquitinated, leading to proteasomal degradation. Under cellular stress, the intracellular level of cleaved form is reduced due to proteasomal degradation. Post-translationally, extensively glycosylated with sulfated N-linked carbohydrates. About 30% of the protein mass is comprised of complex N-linked carbohydrate. Endoplasmic reticulum (ER) stress induces changes in glycosylation status and increases level of hypoglycosylated forms. Core carbohydrates are essential for chaperone activity. Non-secreted forms are hypoglycosylated or unglycosylated. Most abundant in stomach, liver, brain, and testis, with intermediate levels in heart, ovary and kidney.

It localises to the secreted. Its subcellular location is the nucleus. The protein localises to the cytoplasm. It is found in the mitochondrion membrane. The protein resides in the cytosol. It localises to the microsome. Its subcellular location is the endoplasmic reticulum. The protein localises to the mitochondrion. It is found in the perinuclear region. The protein resides in the cytoplasmic vesicle. It localises to the secretory vesicle. Its subcellular location is the chromaffin granule. Its function is as follows. Functions as extracellular chaperone that prevents aggregation of non native proteins. Prevents stress-induced aggregation of blood plasma proteins. Inhibits formation of amyloid fibrils by APP, APOC2, B2M, CALCA, CSN3, SNCA and aggregation-prone LYZ variants (in vitro). Does not require ATP. Maintains partially unfolded proteins in a state appropriate for subsequent refolding by other chaperones, such as HSPA8/HSC70. Does not refold proteins by itself. Binding to cell surface receptors triggers internalization of the chaperone-client complex and subsequent lysosomal or proteasomal degradation. When secreted, protects cells against apoptosis and against cytolysis by complement: inhibits assembly of the complement membrane attack complex (MAC) by preventing polymerization of C9 pore component of the MAC complex. Intracellular forms interact with ubiquitin and SCF (SKP1-CUL1-F-box protein) E3 ubiquitin-protein ligase complexes and promote the ubiquitination and subsequent proteasomal degradation of target proteins. Promotes proteasomal degradation of COMMD1 and IKBKB. Modulates NF-kappa-B transcriptional activity. Following stress, promotes apoptosis. Inhibits apoptosis when associated with the mitochondrial membrane by interference with BAX-dependent release of cytochrome c into the cytoplasm. Plays a role in the regulation of cell proliferation. Following ER stress, suppresses stress-induced apoptosis by stabilizing mitochondrial membrane integrity through interaction with HSPA5. When secreted, does not affect caspase or BAX-mediated intrinsic apoptosis and TNF-induced NF-kappa-B-activity. When secreted, acts as an important modulator during neuronal differentiation through interaction with STMN3. Plays a role in the clearance of immune complexes that arise during cell injury. In Mus musculus (Mouse), this protein is Clusterin.